We begin with the raw amino-acid sequence, 360 residues long: 3-dehydroquinate synthase (360 aa).

NAD(+)-binding positions include 71–76 (DGEQYK), 105–109 (GVVGD), 129–130 (TT), Lys-142, Lys-151, and 169–172 (TLNT). Positions 184, 248, and 265 each coordinate Zn(2+).

This sequence belongs to the sugar phosphate cyclases superfamily. Dehydroquinate synthase family. Requires Co(2+) as cofactor. The cofactor is Zn(2+). It depends on NAD(+) as a cofactor.

The protein resides in the cytoplasm. The enzyme catalyses 7-phospho-2-dehydro-3-deoxy-D-arabino-heptonate = 3-dehydroquinate + phosphate. It participates in metabolic intermediate biosynthesis; chorismate biosynthesis; chorismate from D-erythrose 4-phosphate and phosphoenolpyruvate: step 2/7. Functionally, catalyzes the conversion of 3-deoxy-D-arabino-heptulosonate 7-phosphate (DAHP) to dehydroquinate (DHQ). This Coxiella burnetii (strain RSA 331 / Henzerling II) protein is 3-dehydroquinate synthase.